Reading from the N-terminus, the 162-residue chain is Large ribosomal subunit protein bL17 (162 aa).

The disordered stretch occupies residues 126–162 (ATAKKATRTRRSKKSAAATEAPAAPAAETTEEAPKAE). The segment covering 130 to 139 (KATRTRRSKK) has biased composition (basic residues). The segment covering 140–153 (SAAATEAPAAPAAE) has biased composition (low complexity).

This sequence belongs to the bacterial ribosomal protein bL17 family. In terms of assembly, part of the 50S ribosomal subunit. Contacts protein L32.

This Phocaeicola vulgatus (strain ATCC 8482 / DSM 1447 / JCM 5826 / CCUG 4940 / NBRC 14291 / NCTC 11154) (Bacteroides vulgatus) protein is Large ribosomal subunit protein bL17.